The following is a 625-amino-acid chain: tRNA uridine 5-carboxymethylaminomethyl modification enzyme MnmG (625 aa).

Gly11–Gly16 contacts FAD. Gly271 to Phe285 is a binding site for NAD(+).

This sequence belongs to the MnmG family. As to quaternary structure, homodimer. Heterotetramer of two MnmE and two MnmG subunits. Requires FAD as cofactor.

The protein resides in the cytoplasm. NAD-binding protein involved in the addition of a carboxymethylaminomethyl (cmnm) group at the wobble position (U34) of certain tRNAs, forming tRNA-cmnm(5)s(2)U34. This is tRNA uridine 5-carboxymethylaminomethyl modification enzyme MnmG from Porphyromonas gingivalis (strain ATCC BAA-308 / W83).